We begin with the raw amino-acid sequence, 201 residues long: Elongation factor Ts (201 aa).

The interval 81-84 (TDFV) is involved in Mg(2+) ion dislocation from EF-Tu.

This sequence belongs to the EF-Ts family.

Its subcellular location is the cytoplasm. Functionally, associates with the EF-Tu.GDP complex and induces the exchange of GDP to GTP. It remains bound to the aminoacyl-tRNA.EF-Tu.GTP complex up to the GTP hydrolysis stage on the ribosome. The protein is Elongation factor Ts of Syntrophus aciditrophicus (strain SB).